We begin with the raw amino-acid sequence, 63 residues long: Large ribosomal subunit protein bL35 (63 aa).

Belongs to the bacterial ribosomal protein bL35 family.

In Sulfurimonas denitrificans (strain ATCC 33889 / DSM 1251) (Thiomicrospira denitrificans (strain ATCC 33889 / DSM 1251)), this protein is Large ribosomal subunit protein bL35.